Reading from the N-terminus, the 156-residue chain is Small ribosomal subunit protein uS7c (156 aa).

The protein belongs to the universal ribosomal protein uS7 family. Part of the 30S ribosomal subunit.

Its subcellular location is the plastid. In terms of biological role, one of the primary rRNA binding proteins, it binds directly to 16S rRNA where it nucleates assembly of the head domain of the 30S subunit. In Prototheca wickerhamii, this protein is Small ribosomal subunit protein uS7c (rps7).